The sequence spans 707 residues: Anaerobic ribonucleoside-triphosphate reductase (707 aa).

Residues 4–95 (FGVIKRDGSR…EYRHDRDLAR (92 aa)) form the ATP-cone domain. The 124-residue stretch at 584 to 707 (KKVNPYDKLD…EEVKRRVKHL (124 aa)) folds into the Glycine radical domain. Cys645, Cys648, Cys663, and Cys666 together coordinate Zn(2+). Gly682 carries the post-translational modification Glycine radical.

This sequence belongs to the anaerobic ribonucleoside-triphosphate reductase family. Forms a tetramer composed of two NrdD and two NrdG subunits.

The enzyme catalyses a ribonucleoside 5'-triphosphate + formate + H(+) = a 2'-deoxyribonucleoside 5'-triphosphate + CO2 + H2O. Activated under anaerobic conditions by NrdG, a tightly associated activase. Activation involves the formation of a glycyl radical at Gly-682. Functionally, catalyzes the conversion of ribonucleotides into deoxyribonucleotides, which are required for DNA synthesis and repair. The polypeptide is Anaerobic ribonucleoside-triphosphate reductase (nrdD) (Haemophilus influenzae (strain ATCC 51907 / DSM 11121 / KW20 / Rd)).